The sequence spans 467 residues: Asparagine--tRNA ligase (467 aa).

Belongs to the class-II aminoacyl-tRNA synthetase family. In terms of assembly, homodimer.

Its subcellular location is the cytoplasm. It catalyses the reaction tRNA(Asn) + L-asparagine + ATP = L-asparaginyl-tRNA(Asn) + AMP + diphosphate + H(+). In Haemophilus influenzae (strain ATCC 51907 / DSM 11121 / KW20 / Rd), this protein is Asparagine--tRNA ligase.